We begin with the raw amino-acid sequence, 454 residues long: tRNA-2-methylthio-N(6)-dimethylallyladenosine synthase (454 aa).

Positions 6-122 (RHYHITTFGC…LKDLLESVFD (117 aa)) constitute an MTTase N-terminal domain. Residues cysteine 15, cysteine 51, cysteine 85, cysteine 157, cysteine 161, and cysteine 164 each contribute to the [4Fe-4S] cluster site. The Radical SAM core domain occupies 143–381 (RDSKVTAWVN…HLGNLKVAER (239 aa)). The 65-residue stretch at 383 to 447 (QRYFGRIEEV…PFSLTGQPVE (65 aa)) folds into the TRAM domain.

It belongs to the methylthiotransferase family. MiaB subfamily. In terms of assembly, monomer. [4Fe-4S] cluster is required as a cofactor.

Its subcellular location is the cytoplasm. The enzyme catalyses N(6)-dimethylallyladenosine(37) in tRNA + (sulfur carrier)-SH + AH2 + 2 S-adenosyl-L-methionine = 2-methylsulfanyl-N(6)-dimethylallyladenosine(37) in tRNA + (sulfur carrier)-H + 5'-deoxyadenosine + L-methionine + A + S-adenosyl-L-homocysteine + 2 H(+). Catalyzes the methylthiolation of N6-(dimethylallyl)adenosine (i(6)A), leading to the formation of 2-methylthio-N6-(dimethylallyl)adenosine (ms(2)i(6)A) at position 37 in tRNAs that read codons beginning with uridine. The polypeptide is tRNA-2-methylthio-N(6)-dimethylallyladenosine synthase (Nostoc punctiforme (strain ATCC 29133 / PCC 73102)).